Reading from the N-terminus, the 27-residue chain is NADH-ubiquinone oxidoreductase chain 1 (27 aa).

The helical transmembrane segment at 3–23 threads the bilayer; sequence LIFPLVGSLLLVICVMVGVAF.

It belongs to the complex I subunit 1 family.

Its subcellular location is the mitochondrion inner membrane. The enzyme catalyses a ubiquinone + NADH + 5 H(+)(in) = a ubiquinol + NAD(+) + 4 H(+)(out). Core subunit of the mitochondrial membrane respiratory chain NADH dehydrogenase (Complex I) that is believed to belong to the minimal assembly required for catalysis. Complex I functions in the transfer of electrons from NADH to the respiratory chain. The immediate electron acceptor for the enzyme is believed to be ubiquinone. This Simulium vittatum (Striped black fly) protein is NADH-ubiquinone oxidoreductase chain 1 (ND1).